Here is a 522-residue protein sequence, read N- to C-terminus: Glucans biosynthesis protein G (522 aa).

The first 33 residues, 1-33 (MLDNKFGFKQRVASLRWLSAAIMLSVSAVPAWA), serve as a signal peptide directing secretion.

Belongs to the OpgD/OpgG family.

It is found in the periplasm. Its pathway is glycan metabolism; osmoregulated periplasmic glucan (OPG) biosynthesis. Involved in the biosynthesis of osmoregulated periplasmic glucans (OPGs). This chain is Glucans biosynthesis protein G, found in Pectobacterium carotovorum subsp. carotovorum (strain PC1).